The sequence spans 1147 residues: Multiple epidermal growth factor-like domains protein 10 (1147 aa).

The signal sequence occupies residues 1–25; it reads MAISSSSCLGLICSLLCHWVGTASS. Positions 1 to 857 are necessary for interaction with AP2M1, self-assembly and formation of the irregular, mosaic-like adhesion pattern; the sequence is MAISSSSCLG…ALPADSYQIG (857 aa). Residues 26–857 are Extracellular-facing; sequence LNLEDPNVCS…ALPADSYQIG (832 aa). The EMI domain maps to 30 to 107; sequence DPNVCSHWES…FYESRDMCVP (78 aa). Intrachain disulfides connect Cys34/Cys95, Cys60/Cys69, Cys94/Cys105, Cys109/Cys124, Cys126/Cys135, Cys148/Cys160, Cys154/Cys167, Cys169/Cys178, Cys191/Cys203, Cys197/Cys210, Cys212/Cys221, Cys234/Cys246, Cys240/Cys253, Cys255/Cys264, Cys281/Cys289, Cys283/Cys296, Cys298/Cys307, Cys320/Cys332, Cys326/Cys339, Cys341/Cys350, Cys409/Cys421, Cys415/Cys428, Cys430/Cys439, Cys456/Cys464, Cys458/Cys471, Cys473/Cys482, Cys495/Cys507, Cys501/Cys514, Cys516/Cys525, Cys542/Cys550, Cys544/Cys557, Cys559/Cys568, Cys581/Cys593, Cys587/Cys600, Cys602/Cys611, Cys669/Cys681, Cys675/Cys688, Cys690/Cys699, Cys716/Cys724, Cys718/Cys731, Cys733/Cys742, Cys755/Cys767, Cys761/Cys774, Cys776/Cys785, Cys802/Cys810, Cys804/Cys817, and Cys819/Cys828. EGF-like domains are found at residues 101–136, 144–179, 187–222, 230–265, 278–308, 316–351, 405–440, 453–483, 491–526, 539–569, 577–612, 665–700, 713–743, 751–786, and 799–829; these read SRDMCVPHCADKCVHGRCIAPNTCQCEPGWGGTNCS, WGPHCSSRCQCKNRALCNPITGACHCAAGYRGWRCE, YGNDCHQRCQCQNGATCDHITGECRCSPGYTGAFCE, HGPHCEQRCPCQNGGVCHHVTGECSCPSGWMGTVCG, SQECQCHNGGTCDAATGQCHCSPGYTGERCQ, YGVRCAEACRCVNGGKCYHVSGTCLCEAGFSGELCE, YGEACQQICSCQNGADCDSVTGRCACAPGFKGTDCS, SSRCGCKNDAVCSPVDGSCICKAGWHGVDCS, WGFGCNLTCQCLNGGACNTLDGTCTCAPGWRGAKCE, AERCDCSHADGCHPTTGHCRCLPGWSGVHCD, WGPNCSLPCYCKNGASCSPDDGICECAPGFRGTTCQ, FGKNCAGVCTCTNNGTCNPIDRSCQCYPGWIGSDCS, IHTCNCHNGAFCSAYDGECKCTPGWTGLYCT, YGKDCALICQCQNGADCDHISGQCTCRTGFMGRHCE, and RQICDCLNNSTCDHITGTCYCSPGWKGARCD. Asn134 carries an N-linked (GlcNAc...) asparagine glycan. Asn496 is a glycosylation site (N-linked (GlcNAc...) asparagine). The helical transmembrane segment at 858–878 threads the bilayer; the sequence is AIAGIVVLVLVVLFLLALFII. The Cytoplasmic segment spans residues 879–1147; sequence YRHKQKRKES…STSSSSSSSE (269 aa). The interval 945-1147 is necessary for formation of large intracellular vacuoles; it reads RDRMTIAKSK…STSSSSSSSE (203 aa). Tyr1030 bears the Phosphotyrosine mark. The disordered stretch occupies residues 1093-1147; it reads HVTQDPYDLPKNSHIPCHYDLLPVRDSSSSPKREDGGGSNSTSSNSTSSSSSSSE. Residues 1132-1147 show a composition bias toward low complexity; that stretch reads NSTSSNSTSSSSSSSE.

It belongs to the MEGF family. In terms of assembly, homomer. Interacts with GULP1 and ABCA1. Interacts with AP2M1. Does not interact with MEGF11. Binds with high affinity to complement C1q. Interacts (via the cytoplasmic domain) with NOTCH1 (via NICD domain). Ubiquitinated; mono- and polyubiquitinated forms are detected. In terms of processing, phosphorylated on tyrosine residues. Phosphorylation at Tyr-1030 may be important for muscle cell proliferation. As to expression, expressed in cerebellum (at protein level). Expressed in kidney, stellate cells of the cerebellum and macrophage cell lines.

It localises to the cell membrane. Its subcellular location is the cell projection. The protein localises to the phagocytic cup. Membrane receptor involved in phagocytosis by macrophages and astrocytes of apoptotic cells. Receptor for C1q, an eat-me signal, that binds phosphatidylserine expressed on the surface of apoptotic cells. Cooperates with ABCA1 within the process of engulfment. Promotes the formation of large intracellular vacuoles and may be responsible for the uptake of amyloid-beta peptides. Necessary for astrocyte-dependent apoptotic neuron clearance in the developing cerebellum. Plays a role in muscle cell proliferation, adhesion and motility. Is also an essential factor in the regulation of myogenesis. Controls the balance between skeletal muscle satellite cells proliferation and differentiation through regulation of the notch signaling pathway. May also function in the mosaic spacing of specific neuron subtypes in the retina through homotypic retinal neuron repulsion. Mosaics provide a mechanism to distribute each cell type evenly across the retina, ensuring that all parts of the visual field have access to a full set of processing elements. The sequence is that of Multiple epidermal growth factor-like domains protein 10 from Mus musculus (Mouse).